Reading from the N-terminus, the 480-residue chain is Protein nucleotidyltransferase YdiU (480 aa).

G86, G88, R89, K109, D121, G122, R172, and R179 together coordinate ATP. Catalysis depends on D248, which acts as the Proton acceptor. Mg(2+) is bound by residues N249 and D258. Residue D258 coordinates ATP.

It belongs to the SELO family. It depends on Mg(2+) as a cofactor. The cofactor is Mn(2+).

The catalysed reaction is L-seryl-[protein] + ATP = 3-O-(5'-adenylyl)-L-seryl-[protein] + diphosphate. The enzyme catalyses L-threonyl-[protein] + ATP = 3-O-(5'-adenylyl)-L-threonyl-[protein] + diphosphate. It carries out the reaction L-tyrosyl-[protein] + ATP = O-(5'-adenylyl)-L-tyrosyl-[protein] + diphosphate. It catalyses the reaction L-histidyl-[protein] + UTP = N(tele)-(5'-uridylyl)-L-histidyl-[protein] + diphosphate. The catalysed reaction is L-seryl-[protein] + UTP = O-(5'-uridylyl)-L-seryl-[protein] + diphosphate. The enzyme catalyses L-tyrosyl-[protein] + UTP = O-(5'-uridylyl)-L-tyrosyl-[protein] + diphosphate. Its function is as follows. Nucleotidyltransferase involved in the post-translational modification of proteins. It can catalyze the addition of adenosine monophosphate (AMP) or uridine monophosphate (UMP) to a protein, resulting in modifications known as AMPylation and UMPylation. The sequence is that of Protein nucleotidyltransferase YdiU from Salmonella heidelberg (strain SL476).